The following is a 1297-amino-acid chain: Phosphoribosylformylglycinamidine synthase (1297 aa).

Positions 301-329 (TAISPFPGAATGSGGEIRDEGATGRGAKP) are disordered. ATP is bound at residue 308–319 (GAATGSGGEIRD). The Mg(2+) site is built by aspartate 680, glutamate 719, asparagine 723, and aspartate 887. An ATP-binding site is contributed by serine 889. Positions 1045 to 1297 (IAILREQGVN…RLFRNARMVF (253 aa)) constitute a Glutamine amidotransferase type-1 domain. Cysteine 1138 (nucleophile) is an active-site residue. Catalysis depends on residues histidine 1263 and glutamate 1265.

This sequence in the N-terminal section; belongs to the FGAMS family. In terms of assembly, monomer.

It is found in the cytoplasm. The enzyme catalyses N(2)-formyl-N(1)-(5-phospho-beta-D-ribosyl)glycinamide + L-glutamine + ATP + H2O = 2-formamido-N(1)-(5-O-phospho-beta-D-ribosyl)acetamidine + L-glutamate + ADP + phosphate + H(+). It functions in the pathway purine metabolism; IMP biosynthesis via de novo pathway; 5-amino-1-(5-phospho-D-ribosyl)imidazole from N(2)-formyl-N(1)-(5-phospho-D-ribosyl)glycinamide: step 1/2. In terms of biological role, phosphoribosylformylglycinamidine synthase involved in the purines biosynthetic pathway. Catalyzes the ATP-dependent conversion of formylglycinamide ribonucleotide (FGAR) and glutamine to yield formylglycinamidine ribonucleotide (FGAM) and glutamate. The chain is Phosphoribosylformylglycinamidine synthase from Haemophilus influenzae (strain ATCC 51907 / DSM 11121 / KW20 / Rd).